The following is a 529-amino-acid chain: Probable E3 ubiquitin-protein ligase MGRN1 (529 aa).

Residues glutamate 275–cysteine 314 form an RING-type zinc finger. Disordered regions lie at residues serine 341 to glycine 362 and glutamate 396 to cysteine 529. Polar residues-rich tracts occupy residues alanine 449–glutamate 463 and asparagine 477–valine 487. Residues serine 501–serine 511 show a composition bias toward low complexity. Polar residues predominate over residues glutamate 520 to cysteine 529.

Autoubiquitinated in vitro.

The catalysed reaction is S-ubiquitinyl-[E2 ubiquitin-conjugating enzyme]-L-cysteine + [acceptor protein]-L-lysine = [E2 ubiquitin-conjugating enzyme]-L-cysteine + N(6)-ubiquitinyl-[acceptor protein]-L-lysine.. It functions in the pathway protein modification; protein ubiquitination. In terms of biological role, E3 ubiquitin-protein ligase. Also acts as a negative regulator of hedgehog signaling. The protein is Probable E3 ubiquitin-protein ligase MGRN1 (mgrn1) of Danio rerio (Zebrafish).